Reading from the N-terminus, the 442-residue chain is D-serine dehydratase (442 aa).

Position 118 is an N6-(pyridoxal phosphate)lysine (Lys-118).

It belongs to the serine/threonine dehydratase family. DsdA subfamily. Monomer. Pyridoxal 5'-phosphate is required as a cofactor.

It carries out the reaction D-serine = pyruvate + NH4(+). This is D-serine dehydratase from Escherichia coli O139:H28 (strain E24377A / ETEC).